A 121-amino-acid polypeptide reads, in one-letter code: Large ribosomal subunit protein uL18 (121 aa).

This sequence belongs to the universal ribosomal protein uL18 family. In terms of assembly, part of the 50S ribosomal subunit; part of the 5S rRNA/L5/L18/L25 subcomplex. Contacts the 5S and 23S rRNAs.

This is one of the proteins that bind and probably mediate the attachment of the 5S RNA into the large ribosomal subunit, where it forms part of the central protuberance. The protein is Large ribosomal subunit protein uL18 of Desulfotalea psychrophila (strain LSv54 / DSM 12343).